Consider the following 316-residue polypeptide: Cell surface superoxide dismutase [Cu-Zn] 6 (316 aa).

An N-terminal signal peptide occupies residues 1–18 (MIFIPIIILIYLVSIAAS). The Cu cation site is built by His78, His80, and His96. Zn(2+)-binding residues include His96 and Asp119. Asn128 carries N-linked (GlcNAc...) asparagine glycosylation. His159 contacts Cu cation. Residues Asn162 and Asn240 are each glycosylated (N-linked (GlcNAc...) asparagine). Residues 243–263 (DNVYSPEETRPSDQNKKSHRH) are disordered. Over residues 249-258 (EETRPSDQNK) the composition is skewed to basic and acidic residues. N-linked (GlcNAc...) asparagine glycosylation is found at Asn278 and Asn281. Ser288 is lipidated: GPI-anchor amidated serine. Residues 289–316 (SDCLNDGMMVTGSVFGSLVLGIAAGIFV) constitute a propeptide, removed in mature form.

Belongs to the Cu-Zn superoxide dismutase family. It depends on Cu cation as a cofactor. Zn(2+) serves as cofactor. In terms of processing, the GPI-anchor is attached to the protein in the endoplasmic reticulum and serves to target the protein to the cell surface. There, the glucosamine-inositol phospholipid moiety is cleaved off and the GPI-modified mannoprotein is covalently attached via its lipidless GPI glycan remnant to the 1,6-beta-glucan of the outer cell wall layer.

The protein resides in the secreted. It localises to the cell wall. The protein localises to the membrane. The enzyme catalyses 2 superoxide + 2 H(+) = H2O2 + O2. In terms of biological role, superoxide dismutases serve to convert damaging superoxide radicals, a key form of ROS, to less damaging hydrogen peroxide that can be converted into water by catalase action. May be involved protection against extracellular stress. This is Cell surface superoxide dismutase [Cu-Zn] 6 (SOD6) from Candida albicans (strain SC5314 / ATCC MYA-2876) (Yeast).